We begin with the raw amino-acid sequence, 688 residues long: Glycine--tRNA ligase beta subunit (688 aa).

This sequence belongs to the class-II aminoacyl-tRNA synthetase family. As to quaternary structure, tetramer of two alpha and two beta subunits.

The protein resides in the cytoplasm. The enzyme catalyses tRNA(Gly) + glycine + ATP = glycyl-tRNA(Gly) + AMP + diphosphate. This is Glycine--tRNA ligase beta subunit from Haemophilus influenzae (strain PittEE).